A 586-amino-acid chain; its full sequence is 3-hydroxy-3-methylglutaryl-coenzyme A reductase 3 (586 aa).

2 helical membrane passes run P36 to V59 and A87 to V107. The segment at H108 to D170 is linker. Catalytic regions lie at residues D171 to F586 and D172 to F586. Catalysis depends on charge relay system residues E265, K397, and D473. The Proton donor role is filled by H571. A glycan (N-linked (GlcNAc...) asparagine) is linked at N575.

Belongs to the HMG-CoA reductase family.

It localises to the endoplasmic reticulum membrane. The protein localises to the mitochondrion membrane. Its subcellular location is the plastid membrane. It catalyses the reaction (R)-mevalonate + 2 NADP(+) + CoA = (3S)-3-hydroxy-3-methylglutaryl-CoA + 2 NADPH + 2 H(+). It participates in metabolic intermediate biosynthesis; (R)-mevalonate biosynthesis; (R)-mevalonate from acetyl-CoA: step 3/3. Functionally, catalyzes the synthesis of mevalonate. The specific precursor of all isoprenoid compounds present in plants. This chain is 3-hydroxy-3-methylglutaryl-coenzyme A reductase 3 (HMGR3), found in Hevea brasiliensis (Para rubber tree).